A 313-amino-acid polypeptide reads, in one-letter code: MRTLSDAFIPELPGYYKGKVRENYDLADGRRIIIATDRLSAFDIILTSIPFKGEILTQTARYWFEETADICPNHVLEYPDPNVVVGTRLDILPVEIVVRGYLAGTTSTSILTRYRRGEREMYGMRLPDGLRDNEKLAAPVITPTSKAADGGHDEPLSRAEILAQGLLTQAQWDTVSDYALKLFARGQARAAERGLILADTKYEFGTDKNGTIILADEIHTPDSSRYWIAASYEQALASGTRPDSFDKDFIRSWVAARCDPYKDPIPRIPDEIVEQASRIYAQAYEAITGKAFVPDLSGDTVLDRIRSNLVRFF.

It belongs to the SAICAR synthetase family.

The enzyme catalyses 5-amino-1-(5-phospho-D-ribosyl)imidazole-4-carboxylate + L-aspartate + ATP = (2S)-2-[5-amino-1-(5-phospho-beta-D-ribosyl)imidazole-4-carboxamido]succinate + ADP + phosphate + 2 H(+). Its pathway is purine metabolism; IMP biosynthesis via de novo pathway; 5-amino-1-(5-phospho-D-ribosyl)imidazole-4-carboxamide from 5-amino-1-(5-phospho-D-ribosyl)imidazole-4-carboxylate: step 1/2. The polypeptide is Putative phosphoribosylaminoimidazole-succinocarboxamide synthase 2 (purC2) (Mesorhizobium japonicum (strain LMG 29417 / CECT 9101 / MAFF 303099) (Mesorhizobium loti (strain MAFF 303099))).